Consider the following 803-residue polypeptide: Leucine--tRNA ligase (803 aa).

A 'HIGH' region motif is present at residues 40–51; sequence PYPSGAGLHVGH. The short motif at 575–579 is the 'KMSKS' region element; it reads KMSKS. Lys578 lines the ATP pocket.

Belongs to the class-I aminoacyl-tRNA synthetase family.

The protein localises to the cytoplasm. The enzyme catalyses tRNA(Leu) + L-leucine + ATP = L-leucyl-tRNA(Leu) + AMP + diphosphate. This Listeria monocytogenes serotype 4a (strain HCC23) protein is Leucine--tRNA ligase.